Consider the following 67-residue polypeptide: Small ribosomal subunit protein bS21 (67 aa).

Belongs to the bacterial ribosomal protein bS21 family.

The protein is Small ribosomal subunit protein bS21 of Oleidesulfovibrio alaskensis (strain ATCC BAA-1058 / DSM 17464 / G20) (Desulfovibrio alaskensis).